Consider the following 489-residue polypeptide: Cytochrome P450 monooxygenase AMT3 (489 aa).

A helical transmembrane segment spans residues 292–312 (LFMVAGTETTITALSGLVFLL). Cys436 serves as a coordination point for heme.

The protein belongs to the cytochrome P450 family. The cofactor is heme.

Its subcellular location is the membrane. It functions in the pathway mycotoxin biosynthesis. Its function is as follows. Cytochrome P450 monooxygenase; part of the gene clusters that mediate the biosynthesis of AM-toxins, host-selective toxins (HSTs) causing Alternaria blotch on apple, a worldwide distributed disease. AM-toxins are cyclic depsipeptides containing the 3 residues 2-hydroxy-isovaleric acid (2-HIV), dehydroalanine, L-alanine which are common for all 3 AM-toxins I to III. The fourth precursor is L-alpha-amino-methoxyphenyl-valeric acid (L-Amv) for AM-toxin I, L-alpha-amino-phenyl-valeric acid (L-Apv) for AM-toxin II, and L-alpha-amino-hydroxyphenyl-valeric acid (L-Ahv) for AM-toxin III. AM-toxins have two target sites for affecting susceptible apple cells; they cause invagination of the plasma membrane and electrolyte loss and chloroplast disorganization. The non-ribosomal peptide synthetase AMT1 contains 4 catalytic modules and is responsible for activation of each residue in AM-toxin. The aldo-keto reductase AMT2 catalyzes the conversion of 2-keto-isovaleric acid (2-KIV) to 2-hydroxy-isovaleric acid (2-HIV), one of the precursor residues incorporated by AMT1 during AM-toxin biosynthesis, by reduction of its ketone to an alcohol. The cytochrome P450 monooxygenase AMT3 and the thioesterase AMT4 are also important for AM-toxin production, but their exact function within the AM-toxin biosynthesis are not known yet. Up to 21 proteins (including AMT1 to AMT4) are predicted to be involved in AM-toxin biosynthesis since their expression ishighly up-regulated in AM-toxin-producing cultures. The sequence is that of Cytochrome P450 monooxygenase AMT3 from Alternaria alternata (Alternaria rot fungus).